The primary structure comprises 383 residues: MTKPLRIGIVAGELSGDTLGEGFIKSVKAQYPNAEFVGIGGPKMIAQGCESLFDMEELAVMGLVEVLGRLPRLLKVKAELVRYFSQNPPDVFIGIDAPDFNLRLEKTLKDSGIKTVHYVSPSVWAWRPKRIFKIDAATDLVLAFLPFEKVFYDKYNVACEFIGHTLADAIPMQSDKIAARKLLGLELDRQWLAVLPGSRGGEVALIAKPFIETCQRIHQKHPNMGFVVAAVNEKRREQFEVIWKETAPELKFIIIQDTARNVMTAADSVLLASGTVALECMLIKRPMVVGYQVNKLTGWIAQKLSITEFVSLPNVLAGKELVQEFIQEECHPDFLYPAMEKVLSQDNSELIDRFTEMHQWIKKDADKQAANAVLRLINKETAE.

The protein belongs to the LpxB family.

The enzyme catalyses a lipid X + a UDP-2-N,3-O-bis[(3R)-3-hydroxyacyl]-alpha-D-glucosamine = a lipid A disaccharide + UDP + H(+). The protein operates within bacterial outer membrane biogenesis; LPS lipid A biosynthesis. Condensation of UDP-2,3-diacylglucosamine and 2,3-diacylglucosamine-1-phosphate to form lipid A disaccharide, a precursor of lipid A, a phosphorylated glycolipid that anchors the lipopolysaccharide to the outer membrane of the cell. This chain is Lipid-A-disaccharide synthase, found in Aliivibrio salmonicida (strain LFI1238) (Vibrio salmonicida (strain LFI1238)).